Here is a 23-residue protein sequence, read N- to C-terminus: Dahlein-4.1 (23 aa).

In terms of tissue distribution, expressed by the skin dorsal glands.

The protein localises to the secreted. Has no antimicrobial activity. The protein is Dahlein-4.1 of Ranoidea dahlii (Dahl's aquatic frog).